A 109-amino-acid polypeptide reads, in one-letter code: Cell division protein ZapA (109 aa).

Positions 22 to 99 (EQQDALNMAA…IEQALLEQGR (78 aa)) form a coiled coil.

The protein belongs to the ZapA family. Type 1 subfamily. Homodimer. Interacts with FtsZ.

The protein localises to the cytoplasm. Its function is as follows. Activator of cell division through the inhibition of FtsZ GTPase activity, therefore promoting FtsZ assembly into bundles of protofilaments necessary for the formation of the division Z ring. It is recruited early at mid-cell but it is not essential for cell division. The polypeptide is Cell division protein ZapA (Yersinia enterocolitica serotype O:8 / biotype 1B (strain NCTC 13174 / 8081)).